Reading from the N-terminus, the 311-residue chain is Acetaldehyde dehydrogenase (311 aa).

Catalysis depends on C131, which acts as the Acyl-thioester intermediate. NAD(+) contacts are provided by residues 162-170 and N273; that span reads SVGPGTRKN.

This sequence belongs to the acetaldehyde dehydrogenase family.

It carries out the reaction acetaldehyde + NAD(+) + CoA = acetyl-CoA + NADH + H(+). The sequence is that of Acetaldehyde dehydrogenase from Ralstonia pickettii (strain 12J).